A 171-amino-acid chain; its full sequence is 3-hydroxydecanoyl-[acyl-carrier-protein] dehydratase (171 aa).

The active site involves His70.

It belongs to the thioester dehydratase family. FabA subfamily. In terms of assembly, homodimer.

The protein resides in the cytoplasm. It carries out the reaction a (3R)-hydroxyacyl-[ACP] = a (2E)-enoyl-[ACP] + H2O. It catalyses the reaction (3R)-hydroxydecanoyl-[ACP] = (2E)-decenoyl-[ACP] + H2O. The catalysed reaction is (2E)-decenoyl-[ACP] = (3Z)-decenoyl-[ACP]. Its pathway is lipid metabolism; fatty acid biosynthesis. Its function is as follows. Necessary for the introduction of cis unsaturation into fatty acids. Catalyzes the dehydration of (3R)-3-hydroxydecanoyl-ACP to E-(2)-decenoyl-ACP and then its isomerization to Z-(3)-decenoyl-ACP. Can catalyze the dehydratase reaction for beta-hydroxyacyl-ACPs with saturated chain lengths up to 16:0, being most active on intermediate chain length. The protein is 3-hydroxydecanoyl-[acyl-carrier-protein] dehydratase of Pseudomonas fluorescens (strain Pf0-1).